A 281-amino-acid chain; its full sequence is Elongation factor Ts (281 aa).

The tract at residues 80 to 83 (TDFV) is involved in Mg(2+) ion dislocation from EF-Tu.

This sequence belongs to the EF-Ts family.

The protein localises to the cytoplasm. Functionally, associates with the EF-Tu.GDP complex and induces the exchange of GDP to GTP. It remains bound to the aminoacyl-tRNA.EF-Tu.GTP complex up to the GTP hydrolysis stage on the ribosome. This Vibrio campbellii (strain ATCC BAA-1116) protein is Elongation factor Ts.